The sequence spans 377 residues: Peroxisomal membrane protein PEX14 (377 aa).

Residues 1–15 (MASSEQAEQPSQPSS) show a composition bias toward low complexity. Residues 1 to 24 (MASSEQAEQPSQPSSTPGSENVLP) are disordered. Alanine 2 bears the N-acetylalanine mark. The Peroxisomal matrix segment spans residues 2-108 (ASSEQAEQPS…YSPAGSRWRD (107 aa)). At lysine 34 the chain carries N6-acetyllysine. A helical transmembrane segment spans residues 109–126 (YGALAIIMAGIAFGFHQL). Topologically, residues 127–377 (YKKYLLPLIL…EGASNESERD (251 aa)) are cytoplasmic. The segment at 230–377 (PPSPSAPKIP…EGASNESERD (148 aa)) is disordered. Serine 232 is modified (phosphoserine). Composition is skewed to low complexity over residues 244–259 (PVKSPSPSSPAAVNHH) and 265–275 (SPVSNESTSSS). Phosphoserine is present on residues serine 282 and serine 335. The span at 323–342 (KEDEEDEEDDDVSHVDEEDC) shows a compositional bias: acidic residues. Residues 360–377 (QVEKLRRPEGASNESERD) show a composition bias toward basic and acidic residues.

Belongs to the peroxin-14 family. Interacts with PEX13; forming the PEX13-PEX14 docking complex. Interacts with PEX5 (via WxxxF/Y motifs). Interacts with PEX19. Interacts with tubulin.

It localises to the peroxisome membrane. Component of the PEX13-PEX14 docking complex, a translocon channel that specifically mediates the import of peroxisomal cargo proteins bound to PEX5 receptor. The PEX13-PEX14 docking complex forms a large import pore which can be opened to a diameter of about 9 nm. Mechanistically, PEX5 receptor along with cargo proteins associates with the PEX14 subunit of the PEX13-PEX14 docking complex in the cytosol, leading to the insertion of the receptor into the organelle membrane with the concomitant translocation of the cargo into the peroxisome matrix. Plays a key role for peroxisome movement through a direct interaction with tubulin. The polypeptide is Peroxisomal membrane protein PEX14 (Homo sapiens (Human)).